A 667-amino-acid polypeptide reads, in one-letter code: Serine/threonine-protein kinase BUR1 (667 aa).

The Protein kinase domain maps to 60 to 378 (YKEEEKLGQG…AMSAMKHPFF (319 aa)). Residues 66-74 (LGQGTFGEV) and lysine 89 contribute to the ATP site. Catalysis depends on aspartate 207, which acts as the Proton acceptor. A disordered region spans residues 408–667 (HEAMSQKGPS…SEQKDIADLY (260 aa)). The segment covering 432–443 (KFEKKSGIKREQ) has biased composition (basic and acidic residues). Residues 494–516 (NNHSGSLRNRITPSNMGTHSNPR) show a composition bias toward polar residues. The segment covering 541–556 (YNRGYSSSVNSRYNNR) has biased composition (low complexity). Composition is skewed to polar residues over residues 582-594 (DNNQSQTRLQGHS), 602-611 (SKYNSTQTNI), and 622-632 (NEYNASKLGSQ). Positions 633–667 (DTKKNDYPKHSETQKQQNNEEKKIHSEQKDIADLY) are enriched in basic and acidic residues.

Belongs to the protein kinase superfamily. CMGC Ser/Thr protein kinase family. CDC2/CDKX subfamily.

It localises to the nucleus. It catalyses the reaction L-seryl-[protein] + ATP = O-phospho-L-seryl-[protein] + ADP + H(+). It carries out the reaction L-threonyl-[protein] + ATP = O-phospho-L-threonyl-[protein] + ADP + H(+). The enzyme catalyses [DNA-directed RNA polymerase] + ATP = phospho-[DNA-directed RNA polymerase] + ADP + H(+). Functionally, serine/threonine-protein kinase involved in transcription regulation. Phosphorylates the UBC2/RAD6 ubiquitin-conjugating enzyme (E2), leading to monoubiquitination of histone H2B and the silencing of telomeric-associated genes. Also required for histone H3 methylation. Necessary for the recovery from pheromone-induced growth arrest in the cell cycle G1 phase. This Candida glabrata (strain ATCC 2001 / BCRC 20586 / JCM 3761 / NBRC 0622 / NRRL Y-65 / CBS 138) (Yeast) protein is Serine/threonine-protein kinase BUR1 (BUR1).